Here is a 770-residue protein sequence, read N- to C-terminus: DEAD-box ATP-dependent RNA helicase 24 (770 aa).

The interval 1–106 is disordered; it reads MSKRPKLGGF…ADSDDEDDPV (106 aa). A compositionally biased stretch (polar residues) spans 14–26; the sequence is RPTSYSFERSQPP. Residues 34 to 43 show a composition bias toward acidic residues; the sequence is DDPDLDDIAF. The segment covering 44–55 has biased composition (low complexity); that stretch reads SDDAAAPSDAPP. The short motif at 219-247 is the Q motif element; sequence KSFADCGFPVQLMNAIAKQGYEKPTTIQC. Residues 250-425 enclose the Helicase ATP-binding domain; sequence LPIVLSGRDI…REILTDPIRV (176 aa). Residue 263–270 participates in ATP binding; sequence AKTGSGKT. Positions 373-376 match the DEAD box motif; it reads DEAD. Residues 436–599 form the Helicase C-terminal domain; that stretch reads DIKQVVNVLP…DVPNELMDLA (164 aa). The span at 604–613 shows a compositional bias: basic and acidic residues; the sequence is RFRANRDSRK. Disordered regions lie at residues 604–640, 683–704, and 729–770; these read RFRA…RGRG, VSAS…PSSF, and LPAP…GWDR. Residues 621 to 635 show a composition bias toward gly residues; it reads GKGGGGGGGGGSGAR. The segment covering 683 to 697 has biased composition (low complexity); that stretch reads VSASSSNTPSNSAPS. The span at 744–753 shows a compositional bias: polar residues; that stretch reads TVENANPNPE. Basic and acidic residues predominate over residues 754-770; the sequence is SSRDRTRERKRPSGWDR.

It belongs to the DEAD box helicase family.

It catalyses the reaction ATP + H2O = ADP + phosphate + H(+). The chain is DEAD-box ATP-dependent RNA helicase 24 from Oryza sativa subsp. japonica (Rice).